A 262-amino-acid polypeptide reads, in one-letter code: Transcription factor bHLH81 (262 aa).

The segment at 1 to 29 (MQPTSVGSSGGGDDGGGRGGGGGLSRSGL) is disordered. Positions 8 to 25 (SSGGGDDGGGRGGGGGLS) are enriched in gly residues. A bHLH domain is found at 190–240 (CATHPRSIAERVRRTRISDRIRKLQELVPNMDKQTNTADMLEEAVEYVKVL).

Homodimer. As to expression, expressed in flowers.

It is found in the nucleus. The sequence is that of Transcription factor bHLH81 (BHLH81) from Arabidopsis thaliana (Mouse-ear cress).